Reading from the N-terminus, the 213-residue chain is Orotate phosphoribosyltransferase (213 aa).

Lysine 26 is a 5-phospho-alpha-D-ribose 1-diphosphate binding site. Orotate is bound at residue 34–35 (FF). Residues 72-73 (YK), arginine 99, lysine 100, lysine 103, histidine 105, and 124-132 (DDVITAGTA) contribute to the 5-phospho-alpha-D-ribose 1-diphosphate site. Orotate contacts are provided by threonine 128 and arginine 156.

This sequence belongs to the purine/pyrimidine phosphoribosyltransferase family. PyrE subfamily. As to quaternary structure, homodimer. Requires Mg(2+) as cofactor.

It carries out the reaction orotidine 5'-phosphate + diphosphate = orotate + 5-phospho-alpha-D-ribose 1-diphosphate. Its pathway is pyrimidine metabolism; UMP biosynthesis via de novo pathway; UMP from orotate: step 1/2. Catalyzes the transfer of a ribosyl phosphate group from 5-phosphoribose 1-diphosphate to orotate, leading to the formation of orotidine monophosphate (OMP). The chain is Orotate phosphoribosyltransferase from Pseudomonas putida (strain W619).